The following is an 81-amino-acid chain: Small ribosomal subunit protein bS20 (81 aa).

This sequence belongs to the bacterial ribosomal protein bS20 family.

Functionally, binds directly to 16S ribosomal RNA. This chain is Small ribosomal subunit protein bS20, found in Mycoplasma mycoides subsp. mycoides SC (strain CCUG 32753 / NCTC 10114 / PG1).